The sequence spans 55 residues: ATP synthase F(0) complex subunit 8 (55 aa).

The chain crosses the membrane as a helical span at residues 4-24; that stretch reads LNPAPWFAILVFSWLVFLTVI. The disordered stretch occupies residues 34–55; sequence TNEPTSQSTEKAKPEPWNWPWH.

The protein belongs to the ATPase protein 8 family. As to quaternary structure, component of the ATP synthase complex composed at least of ATP5F1A/subunit alpha, ATP5F1B/subunit beta, ATP5MC1/subunit c (homooctomer), MT-ATP6/subunit a, MT-ATP8/subunit 8, ATP5ME/subunit e, ATP5MF/subunit f, ATP5MG/subunit g, ATP5MK/subunit k, ATP5MJ/subunit j, ATP5F1C/subunit gamma, ATP5F1D/subunit delta, ATP5F1E/subunit epsilon, ATP5PF/subunit F6, ATP5PB/subunit b, ATP5PD/subunit d, ATP5PO/subunit OSCP. ATP synthase complex consists of a soluble F(1) head domain (subunits alpha(3) and beta(3)) - the catalytic core - and a membrane F(0) domain - the membrane proton channel (subunits c, a, 8, e, f, g, k and j). These two domains are linked by a central stalk (subunits gamma, delta, and epsilon) rotating inside the F1 region and a stationary peripheral stalk (subunits F6, b, d, and OSCP).

It is found in the mitochondrion membrane. Functionally, subunit 8, of the mitochondrial membrane ATP synthase complex (F(1)F(0) ATP synthase or Complex V) that produces ATP from ADP in the presence of a proton gradient across the membrane which is generated by electron transport complexes of the respiratory chain. ATP synthase complex consist of a soluble F(1) head domain - the catalytic core - and a membrane F(1) domain - the membrane proton channel. These two domains are linked by a central stalk rotating inside the F(1) region and a stationary peripheral stalk. During catalysis, ATP synthesis in the catalytic domain of F(1) is coupled via a rotary mechanism of the central stalk subunits to proton translocation. In vivo, can only synthesize ATP although its ATP hydrolase activity can be activated artificially in vitro. Part of the complex F(0) domain. This Oncorhynchus mykiss (Rainbow trout) protein is ATP synthase F(0) complex subunit 8.